A 507-amino-acid chain; its full sequence is ATP synthase subunit alpha, chloroplastic (507 aa).

An ATP-binding site is contributed by 170–177 (GDRQTGKT).

Belongs to the ATPase alpha/beta chains family. As to quaternary structure, F-type ATPases have 2 components, CF(1) - the catalytic core - and CF(0) - the membrane proton channel. CF(1) has five subunits: alpha(3), beta(3), gamma(1), delta(1), epsilon(1). CF(0) has four main subunits: a, b, b' and c.

It localises to the plastid. It is found in the chloroplast thylakoid membrane. It carries out the reaction ATP + H2O + 4 H(+)(in) = ADP + phosphate + 5 H(+)(out). Produces ATP from ADP in the presence of a proton gradient across the membrane. The alpha chain is a regulatory subunit. This chain is ATP synthase subunit alpha, chloroplastic, found in Nicotiana sylvestris (Wood tobacco).